The primary structure comprises 310 residues: Tagatose-6-phosphate kinase (310 aa).

This sequence belongs to the carbohydrate kinase PfkB family. LacC subfamily.

It catalyses the reaction D-tagatofuranose 6-phosphate + ATP = D-tagatofuranose 1,6-bisphosphate + ADP + H(+). Its pathway is carbohydrate metabolism; D-tagatose 6-phosphate degradation; D-glyceraldehyde 3-phosphate and glycerone phosphate from D-tagatose 6-phosphate: step 1/2. The protein is Tagatose-6-phosphate kinase of Streptococcus agalactiae serotype Ia (strain ATCC 27591 / A909 / CDC SS700).